The chain runs to 162 residues: MTNFTHINKQGNAKMVDVSNKEITKRVAEAHSSIIVNEKIYSQITQNTNSKGNVLNTAQIAGIMAAKNTSTIIPMCHPLPLTGIDISFKWDSNNDDSYRLNITAVVSTTGKTGVEMEALTAASVTALTIYDMTKAIDKGMIIGETYLESKSGGKSGDFHRKN.

Residues 75 to 77 and 116 to 117 contribute to the substrate site; these read MCH and ME. Asp131 is an active-site residue.

This sequence belongs to the MoaC family. As to quaternary structure, homohexamer; trimer of dimers.

It catalyses the reaction (8S)-3',8-cyclo-7,8-dihydroguanosine 5'-triphosphate = cyclic pyranopterin phosphate + diphosphate. The protein operates within cofactor biosynthesis; molybdopterin biosynthesis. Catalyzes the conversion of (8S)-3',8-cyclo-7,8-dihydroguanosine 5'-triphosphate to cyclic pyranopterin monophosphate (cPMP). The protein is Cyclic pyranopterin monophosphate synthase of Staphylococcus epidermidis (strain ATCC 35984 / DSM 28319 / BCRC 17069 / CCUG 31568 / BM 3577 / RP62A).